Here is a 439-residue protein sequence, read N- to C-terminus: tRNA-2-methylthio-N(6)-dimethylallyladenosine synthase (439 aa).

The MTTase N-terminal domain maps to 1–117; sequence MKFYIRTFGC…IGNLVKRALN (117 aa). Residues C10, C46, C80, C153, C157, and C160 each contribute to the [4Fe-4S] cluster site. The region spanning 139–371 is the Radical SAM core domain; that stretch reads PISKHHAWIT…MELQKRINLE (233 aa). Residues 369-436 form the TRAM domain; sequence NLEENEKYLE…PGPLYGEVVN (68 aa).

Belongs to the methylthiotransferase family. MiaB subfamily. Monomer. Requires [4Fe-4S] cluster as cofactor.

The protein resides in the cytoplasm. The catalysed reaction is N(6)-dimethylallyladenosine(37) in tRNA + (sulfur carrier)-SH + AH2 + 2 S-adenosyl-L-methionine = 2-methylsulfanyl-N(6)-dimethylallyladenosine(37) in tRNA + (sulfur carrier)-H + 5'-deoxyadenosine + L-methionine + A + S-adenosyl-L-homocysteine + 2 H(+). In terms of biological role, catalyzes the methylthiolation of N6-(dimethylallyl)adenosine (i(6)A), leading to the formation of 2-methylthio-N6-(dimethylallyl)adenosine (ms(2)i(6)A) at position 37 in tRNAs that read codons beginning with uridine. This is tRNA-2-methylthio-N(6)-dimethylallyladenosine synthase from Petrotoga mobilis (strain DSM 10674 / SJ95).